The sequence spans 312 residues: Pantothenate kinase (312 aa).

97–104 (GSVAVGKS) lines the ATP pocket.

This sequence belongs to the prokaryotic pantothenate kinase family.

The protein resides in the cytoplasm. The enzyme catalyses (R)-pantothenate + ATP = (R)-4'-phosphopantothenate + ADP + H(+). It functions in the pathway cofactor biosynthesis; coenzyme A biosynthesis; CoA from (R)-pantothenate: step 1/5. This chain is Pantothenate kinase, found in Mycobacterium bovis (strain BCG / Pasteur 1173P2).